Reading from the N-terminus, the 434-residue chain is MTDILNCTKSEEIFSAAQELMPGGVSSPVRAFKSVGGQPIVFDRVKGPFAWDIDGNRYIDYIGSWGPAICGHAHPEVTTALQEAIEKGTSFGAPCVLENKLAEMVIDAVPSVEMVRFVNSGTEACMAVLRLMRAFTGRDKVIKFDGCYHGHADMFLVKAGSGVATLGLPDSPGVPRTTTANTLTAPYNDLEAVKKLFSENPDAISGVILEPIVGNAGFITPEPGFLEGLRELTTENGSLLVFDEVMTGFRISYGGAQEKFGVTPDLTTLGKVIGGGLPVGAYGGKKEIMSMVAPSGPVYQAGTLSGNPLAMTAGIKTLELLKQEGTYEKLDAITSRLIEGIIQSAENNGIAIYGGSVSAMFGFFLCDGPVRNFDEAKTNDAKLFGKLHREMLRRGVYLAPSPFEAGFTSLAHNEEEIDKTIEVFDQCFNTIKNQ.

Position 271 is an N6-(pyridoxal phosphate)lysine (K271).

It belongs to the class-III pyridoxal-phosphate-dependent aminotransferase family. HemL subfamily. As to quaternary structure, homodimer. It depends on pyridoxal 5'-phosphate as a cofactor.

It localises to the cytoplasm. The catalysed reaction is (S)-4-amino-5-oxopentanoate = 5-aminolevulinate. It participates in porphyrin-containing compound metabolism; protoporphyrin-IX biosynthesis; 5-aminolevulinate from L-glutamyl-tRNA(Glu): step 2/2. Its pathway is porphyrin-containing compound metabolism; chlorophyll biosynthesis. This chain is Glutamate-1-semialdehyde 2,1-aminomutase, found in Prochlorococcus marinus (strain MIT 9312).